The sequence spans 174 residues: Endoribonuclease YbeY (174 aa).

Zn(2+)-binding residues include H129, H133, and H139.

This sequence belongs to the endoribonuclease YbeY family. The cofactor is Zn(2+).

The protein localises to the cytoplasm. Its function is as follows. Single strand-specific metallo-endoribonuclease involved in late-stage 70S ribosome quality control and in maturation of the 3' terminus of the 16S rRNA. This chain is Endoribonuclease YbeY, found in Lactobacillus acidophilus (strain ATCC 700396 / NCK56 / N2 / NCFM).